The chain runs to 140 residues: Putative esterase MT1895 (140 aa).

It belongs to the thioesterase PaaI family.

In Mycobacterium tuberculosis (strain CDC 1551 / Oshkosh), this protein is Putative esterase MT1895.